Consider the following 837-residue polypeptide: MTSPKLDRRQMLKLEAAAIAAAAAGLPVPALAANLATEREVSELKWDKAACRFCGTGCSVMVATKENRVVATHGDIKAEVNRGLNCVKGYFLSKIMYGHDRLTQPMLRKANGKYDKNGDFTPVSWTEAFDIMEVKWKEAMKKRGPNGVAMFGSGQWTIWEGYAASKLFKAGFRTNNIDPNARHCMASAVAGMMRTFGIDEPPGCYDDIEATDAFVLWGSNMAEMHPILWTRLTDRRLSAPHVRVAVLSTFEHRSFDLADIGMVFKPQTDLYLLNAIANHIIKTGRVNKDFVAAHTVFRRGQTDIGYGLRPEHPLQKKATGAAKANDSTDMSYDEYVKFVSEYTLEKAAEMSGVPLNRLEALAELYADPKTKVVSFWTMGFNQHTRGVWCNNLVYNIHLLTGKISSPGNSPFSLTGQPSACGTAREVGTFSHRLPADMVVTNKEHRTKAEHIWQLPEGTIPDKPGAHAVLQSRMLKDGLINAYWVQVNNNLQAGPNANEETYPGFRNPDNFIVVSDAYPSVTALAADLILPTAMWVEKEGAYGNAERRTQFWHQLVPAPGESKSDLWQLMEFSKRFKIEEVWPEELIAKKPEVRGKTLFDVLYKNGQVDKFPVSDIEQGYLNDESKAFGFYVHKGLFEEYASFGRGHGHDLAPFDAYHKERGLRWPVVNGQETRWRFREGSDPYVKQGTDVQFYGYPDGKARIFALPYEPAAESPDGEYPFWLSTGRVLEHWHSGTMTRRVPELYKAFPEAVCFMHPDDAQEAKIRRGDEVKVVSRRGFIRVRVETRGRDRPPRGLVFVPWFDESKLINKVTLDATDPISLQTDFKKCAVRIERVNVS.

Positions 1 to 32 (MTSPKLDRRQMLKLEAAAIAAAAAGLPVPALA) form a signal peptide, tat-type signal. The 4Fe-4S Mo/W bis-MGD-type domain occupies 44 to 100 (LKWDKAACRFCGTGCSVMVATKENRVVATHGDIKAEVNRGLNCVKGYFLSKIMYGHD). Residues Cys51, Cys54, Cys58, and Cys86 each contribute to the [4Fe-4S] cluster site. Mo-bis(molybdopterin guanine dinucleotide) contacts are provided by residues Lys88, Gln155, Asn180, Cys184, 217 to 224 (WGSNMAEM), 248 to 252 (STFEH), 267 to 269 (QTD), Met378, Gln382, Asn488, 514 to 515 (SD), Lys537, Asp564, and 724 to 733 (TGRVLEHWHS). Trp800 contributes to the substrate binding site. Mo-bis(molybdopterin guanine dinucleotide) contacts are provided by Asn808 and Lys825.

It belongs to the prokaryotic molybdopterin-containing oxidoreductase family. NasA/NapA/NarB subfamily. As to quaternary structure, component of the periplasmic nitrate reductase NapAB complex composed of NapA and NapB. [4Fe-4S] cluster serves as cofactor. Requires Mo-bis(molybdopterin guanine dinucleotide) as cofactor. Post-translationally, predicted to be exported by the Tat system. The position of the signal peptide cleavage has not been experimentally proven.

It is found in the periplasm. The catalysed reaction is 2 Fe(II)-[cytochrome] + nitrate + 2 H(+) = 2 Fe(III)-[cytochrome] + nitrite + H2O. Functionally, catalytic subunit of the periplasmic nitrate reductase complex NapAB. Receives electrons from NapB and catalyzes the reduction of nitrate to nitrite. This is Periplasmic nitrate reductase from Bradyrhizobium diazoefficiens (strain JCM 10833 / BCRC 13528 / IAM 13628 / NBRC 14792 / USDA 110).